A 91-amino-acid polypeptide reads, in one-letter code: Large ribosomal subunit protein eL37 (91 aa).

4 residues coordinate Zn(2+): cysteine 19, cysteine 22, cysteine 34, and cysteine 37. The C4-type zinc-finger motif lies at 19–37; that stretch reads CRRCGKSSFHIQKKTCASC.

The protein belongs to the eukaryotic ribosomal protein eL37 family. Requires Zn(2+) as cofactor.

Binds to the 23S rRNA. The polypeptide is Large ribosomal subunit protein eL37 (rpl37) (Dictyostelium discoideum (Social amoeba)).